Reading from the N-terminus, the 582-residue chain is MPDATGVIARNPFEEAPSRLNQYTPEEAAALQARLEKKLGPEYISSRPGAAGLKVHYLAADKCINLANEVFGFNGWSSSIQNIQIDFVDESPNTGKVSLGLSVIVRVTLKDGAYHEDLGYGHIENCKGKAAAFEKAKKEATTDALKRALRNFGNVLGNCIYDKDYISKVSKLKTVPSKLDVGDLHRHPDFAPIKKEPMRVKPSLEDDDLPPNPSIAGRNTSTNSAADMDAEFGSDVFDEADFNVGEGEYPDGIVAEDTQKRHQPPTPVGRPNAHLNLPKHALGAQASGNQHVVTPSKPERPMNLAPAGRQIPNQALNNRPFPPPAQNQYTNQRQSVPLPGSNGGLQNGRSIPLGQRASNGMATGSDAGAQVPIKQEHGAKQPNPAPQNTAVPATPGINGQGPPVVGFLSARGADMLRENPHSAATVAPAFNPHAESPSIRKTAGVDHTKSIPISKPMLAGSASPLSNQTRDFINPSAEMHRKIGAPSGSVVGGPMNRGPSVSSYRPLTRPNVDPKAAAQNNTAAANRMAPNMNGKRPPLNDVTNETLPGGNGCTPAPGLNDPKRAKYDESMSAQQHQQQHQH.

The DNA-binding element occupies K146–R150. A compositionally biased stretch (basic and acidic residues) spans K194–L204. Disordered stretches follow at residues K194–A226, Q310–Q400, and A485–H582. Over residues Q326 to S335 the composition is skewed to polar residues. The segment covering A516–A529 has biased composition (low complexity).

The protein belongs to the RAD52 family. Part of a complex that includes RAD51, RAD52 and RAD59.

It localises to the nucleus. Its function is as follows. Involved in DNA double-strand break (DSB) repair and recombination. Promotes the annealing of complementary single-stranded DNA and by stimulation of the RAD51 recombinase. The chain is DNA repair and recombination protein radC (radC) from Emericella nidulans (strain FGSC A4 / ATCC 38163 / CBS 112.46 / NRRL 194 / M139) (Aspergillus nidulans).